Reading from the N-terminus, the 328-residue chain is tRNA uridine(34) hydroxylase (328 aa).

The Rhodanese domain maps to 130-224 (LDEDTVVLDT…YGKDPEVQGE (95 aa)). Catalysis depends on C184, which acts as the Cysteine persulfide intermediate.

This sequence belongs to the TrhO family.

The enzyme catalyses uridine(34) in tRNA + AH2 + O2 = 5-hydroxyuridine(34) in tRNA + A + H2O. Functionally, catalyzes oxygen-dependent 5-hydroxyuridine (ho5U) modification at position 34 in tRNAs. The protein is tRNA uridine(34) hydroxylase of Streptococcus pyogenes serotype M3 (strain SSI-1).